Consider the following 666-residue polypeptide: DNA ligase (666 aa).

NAD(+)-binding positions include 34–38, 83–84, and E114; these read DEEYD and SL. K116 acts as the N6-AMP-lysine intermediate in catalysis. NAD(+)-binding residues include R137, E174, K290, and K314. 4 residues coordinate Zn(2+): C408, C411, C424, and C429. Residues 584–666 enclose the BRCT domain; sequence SIEGPLKGLT…LKMVKREHNG (83 aa).

This sequence belongs to the NAD-dependent DNA ligase family. LigA subfamily. It depends on Mg(2+) as a cofactor. Mn(2+) serves as cofactor.

The enzyme catalyses NAD(+) + (deoxyribonucleotide)n-3'-hydroxyl + 5'-phospho-(deoxyribonucleotide)m = (deoxyribonucleotide)n+m + AMP + beta-nicotinamide D-nucleotide.. In terms of biological role, DNA ligase that catalyzes the formation of phosphodiester linkages between 5'-phosphoryl and 3'-hydroxyl groups in double-stranded DNA using NAD as a coenzyme and as the energy source for the reaction. It is essential for DNA replication and repair of damaged DNA. This is DNA ligase from Coprothermobacter proteolyticus (strain ATCC 35245 / DSM 5265 / OCM 4 / BT).